Reading from the N-terminus, the 245-residue chain is tRNA1(Val) (adenine(37)-N6)-methyltransferase (245 aa).

Belongs to the methyltransferase superfamily. tRNA (adenine-N(6)-)-methyltransferase family.

Its subcellular location is the cytoplasm. The enzyme catalyses adenosine(37) in tRNA1(Val) + S-adenosyl-L-methionine = N(6)-methyladenosine(37) in tRNA1(Val) + S-adenosyl-L-homocysteine + H(+). Its function is as follows. Specifically methylates the adenine in position 37 of tRNA(1)(Val) (anticodon cmo5UAC). The polypeptide is tRNA1(Val) (adenine(37)-N6)-methyltransferase (Escherichia coli O157:H7 (strain EC4115 / EHEC)).